Reading from the N-terminus, the 924-residue chain is Autophagy-related protein 9B (924 aa).

The interval 1-144 (MVSRMGWGGR…QDSPGLRVGP (144 aa)) is disordered. Over 1–207 (MVSRMGWGGR…KIYSYHQRNG (207 aa)) the chain is Cytoplasmic. A compositionally biased stretch (low complexity) spans 17-27 (WGDLGPGSVPL). Over residues 28-40 (LPMPLPPPPPPSC) the composition is skewed to pro residues. The span at 78-88 (LQGTGASQSCH) shows a compositional bias: polar residues. A compositionally biased stretch (low complexity) spans 98–113 (PTQAQPAMTPASASPS). The Tyrosine-based sorting signal motif lies at 151–154 (YERL). The helical transmembrane segment at 208-228 (FACILLEDVFQLGQFIFIVTF) threads the bilayer. Topologically, residues 229 to 276 (TTFLLRCVDYNVLFANQPSNHTRPGPFHSKVTLSDAILPSAQCAERIR) are lumenal. A helical transmembrane segment spans residues 277-297 (SSPLLVLLLVLAAGFWLVQLL). Residues 298–438 (RSVCNLFSYW…GALAARWGRT (141 aa)) lie on the Cytoplasmic side of the membrane. Residues 439–459 (VLLLAALNLALSPLVLAWQVL) lie within the membrane without spanning it. Over 460–526 (HVFYSHVELL…AAPPAPLRTL (67 aa)) the chain is Cytoplasmic. The chain crosses the membrane as a helical span at residues 527–547 (LARQLVFFAGALFAALLVLTV). Over 548–551 (YDED) the chain is Lumenal. Residues 552 to 572 (VLAVEHVLTAMTALGVTATVA) form a helical membrane-spanning segment. The Cytoplasmic segment spans residues 573–624 (RSFIPEEQCQGRAPQLLLQTALAHMHYLPEEPGPGGRDRAYRQMAQLLQYRA). Residues 625 to 645 (VSLLEELLSPLLTPLFLLFWF) lie within the membrane without spanning it. The Cytoplasmic segment spans residues 646–924 (RPRALEIIDF…KEPDRASCTD (279 aa)). A disordered region spans residues 847-924 (QQEPWGEAAA…KEPDRASCTD (78 aa)). Positions 878-890 (SWSSDGSSPASSP) are enriched in low complexity. Basic and acidic residues predominate over residues 913-924 (TQKEPDRASCTD).

The protein belongs to the ATG9 family. Homotrimer; forms a homotrimer with a central pore that forms a path between the two membrane leaflets. In terms of tissue distribution, highly expressed in placenta (trophoblast cells) and pituitary gland. Not expressed in vascular endothelial.

It localises to the preautophagosomal structure membrane. The enzyme catalyses a 1,2-diacyl-sn-glycero-3-phosphocholine(in) = a 1,2-diacyl-sn-glycero-3-phosphocholine(out). It carries out the reaction a 1,2-diacyl-sn-glycero-3-phospho-L-serine(in) = a 1,2-diacyl-sn-glycero-3-phospho-L-serine(out). It catalyses the reaction a 1,2-diacyl-sn-glycero-3-phosphoethanolamine(in) = a 1,2-diacyl-sn-glycero-3-phosphoethanolamine(out). Functionally, phospholipid scramblase involved in autophagy by mediating autophagosomal membrane expansion. Cycles between the preautophagosomal structure/phagophore assembly site (PAS) and the cytoplasmic vesicle pool and supplies membrane for the growing autophagosome. Lipid scramblase activity plays a key role in preautophagosomal structure/phagophore assembly by distributing the phospholipids that arrive through ATG2 (ATG2A or ATG2B) from the cytoplasmic to the luminal leaflet of the bilayer, thereby driving autophagosomal membrane expansion. In addition to autophagy, also plays a role in necrotic cell death. This Homo sapiens (Human) protein is Autophagy-related protein 9B (ATG9B).